The primary structure comprises 339 residues: Probable cytosolic iron-sulfur protein assembly protein CIAO1 (339 aa).

WD repeat units lie at residues 14–53, 59–98, 103–142, 148–187, 192–231, 250–289, and 301–339; these read HPDS…WICK, GHQR…FECV, GHEN…EYEC, SHTQ…WVCC, GHES…NEQG, FHSR…DPQQ, and AHSQ…PEGL. The LYR motif; required for interaction with HSC20 motif lies at 176–178; sequence LYR.

It belongs to the WD repeat CIA1 family. Component of the CIA complex. Interacts with CIAO2A and forms a complex with CIAO2B and MMS19; the interactions with CIAO2A and CIAO2B are mutually exclusive. Interacts with CHD1L, ERCC2, IREB2 and POLD1. Component of the MMXD complex, which includes CIAO1, ERCC2, CIAO2B, MMS19 and SLC25A5. Interacts with WT1. Interacts with CIAO3. Interacts (via LYR motif) with HSC20.

The protein localises to the cytoplasm. Its function is as follows. Key component of the cytosolic iron-sulfur protein assembly (CIA) complex, a multiprotein complex that mediates the incorporation of iron-sulfur cluster into extramitochondrial Fe/S proteins. As a CIA complex component, interacts specifically with CIAO2A or CIAO2B and MMS19 to assist different branches of iron-sulfur protein assembly, depending of its interactors. The complex CIAO1:CIAO2B:MMS19 binds to and facilitates the assembly of most cytosolic-nuclear Fe/S proteins. CIAO1:CIAO2A specifically matures ACO1 and stabilizes IREB2. Seems to specifically modulate the transactivation activity of WT1. As part of the mitotic spindle-associated MMXD complex it may play a role in chromosome segregation. The protein is Probable cytosolic iron-sulfur protein assembly protein CIAO1 of Homo sapiens (Human).